The primary structure comprises 759 residues: Tripartite motif-containing protein 46 (759 aa).

A required for proximal axon localization, axon formation and migration region spans residues 1–166 (MAEGEDMQTF…VERYRQSVSV (166 aa)). Residues 33–59 (CPVCQEMYKQPLVLPCTHNVCQACARE) form an RING-type 1; degenerate zinc finger. Residues 67-98 (IGHGGDPSSEPTSPASTPSTRSPRLSRRTLPK) are disordered. Residues 73 to 89 (PSSEPTSPASTPSTRSP) are compositionally biased toward low complexity. The segment at 172–231 (CQLCKPPPLEATKGCTECRATFCNECFKLFHPWGTQKAQHEPTLPTLSFRPKGLMCPDHK) adopts an RING-type 2; degenerate zinc-finger fold. The B box-type zinc-finger motif lies at 222 to 263 (PKGLMCPDHKEEVTHYCKTCQRLVCQLCRVRRTHSGHKITPV). Residues Cys227, His230, Cys249, and His255 each coordinate Zn(2+). Positions 322 to 400 (AVLEEKRASL…RATEALQTFR (79 aa)) form a coiled coil. Ser330 is modified (phosphoserine). In terms of domain architecture, COS spans 370–427 (LKETDQPCFVQAAKQLHNRIARATEALQTFRPAASSSFRHCQLDVGREMKLLTELSFL). The tract at residues 411 to 429 (QLDVGREMKLLTELSFLRV) is required for microtubule association, proximal axon localization and axon formation. The 100-residue stretch at 429 to 528 (VPEAPVIDTQ…EDVHLHTPPA (100 aa)) folds into the Fibronectin type-III domain. Residues 526 to 747 (PPAPVLHFFL…LQEPVGTKPE (222 aa)) form the B30.2/SPRY domain. Ser627 bears the Phosphoserine mark.

It belongs to the TRIM/RBCC family. In terms of assembly, interacts with TUBB3 and TUBA4A. Expressed in the central nervous system, including pyramidal neurons and interneurons in the cortex and hippocampus and all neuronal cell types in the cerebral and cerebellar cortex, and in the peripheral nervous system, including the dorsal root ganglion neurons.

The protein localises to the cell projection. Its subcellular location is the axon. It is found in the cytoplasm. The protein resides in the cytoskeleton. Microtubule-associated protein that is involved in the formation of parallel microtubule bundles linked by cross-bridges in the proximal axon. Required for the uniform orientation and maintenance of the parallel microtubule fascicles, which are important for efficient cargo delivery and trafficking in axons. Thereby also required for proper axon formation, the establishment of neuronal polarity and proper neuronal migration. The protein is Tripartite motif-containing protein 46 (Trim46) of Mus musculus (Mouse).